The chain runs to 422 residues: MELENKFKKVTLGHEEGSGAPCLKCKEKCEGFELHFWRKICRNCKCGQEEHSVLSNNEDDRKVGKLFEDTKYTALIAKLKTDGIPTYKRNVMILTSPVAAKKDVSINTVTYEWAPPVQNQALARRYMELIPKDKQPVAGSEGAQYRKKQLAKQLPAHDQDPSKCHELSPNEVKQMEQFVKKYKNEVLGVGDVKLPKEVEAQASGAGRSTNGSLSTLTTVKSTDDKVAAQKGSTYYCFRCKENMREGDPAVYAERAGYDKLWHPSCFVCFTCNELLVDMIYFWKNGKLYCGRHYCDSEKPRCAGCDELIFSNEYTQAEGLNWHLKHFCCFDCDIVLAGEIYVMVNDKAVCKPCYVKNHAVSCQGCHNAIDPEVQRVSYNGFHWHAAPECFICSCCSKCLIGQKFMPIEGMVFCSVECKKKMSS.

The region spanning 92–199 (MILTSPVAAK…GDVKLPKEVE (108 aa)) is the PET domain. Residues 135–165 (QPVAGSEGAQYRKKQLAKQLPAHDQDPSKCH) form a disordered region. Residues 155-165 (PAHDQDPSKCH) show a composition bias toward basic and acidic residues. LIM zinc-binding domains lie at 234–299 (YYCF…SEKP), 300–359 (RCAG…NHAV), and 360–422 (SCQG…KMSS).

It belongs to the prickle / espinas / testin family. As to expression, expressed in the animal hemisphere at the 4-cell stage. By stage 18, expressed in cells adjacent to the anterior neural plate. In late neurula, expressed in the cranial neural crest. At tail bud stages, expressed strongly in the head, ventral to the developing eye, branchial arches and lateral line placodes. Also localized in the otic vesicle, dorsal fin and notochord with weaker expression at intersomitic junctions of tail bud embryos.

Its subcellular location is the cytoplasm. It is found in the cell cortex. It localises to the cell junction. The protein localises to the focal adhesion. Scaffold protein that may play a role in cell adhesion, cell spreading and in the reorganization of the actin cytoskeleton. May inhibit cell growth. Regulates cranial neural crest migration. Acts together with prickle1 to control axial elongation. The polypeptide is Testin (Xenopus laevis (African clawed frog)).